The primary structure comprises 519 residues: Cell adhesion molecule CEACAM1 (519 aa).

The N-terminal stretch at 1–34 is a signal peptide; the sequence is MELASARLLRGQIPWRGLLLTASLLTYWSPLTTA. Q35 is subject to Pyrrolidone carboxylic acid. Residues 35–425 are Extracellular-facing; sequence QVTVDAVPPN…QGNSGLSEGA (391 aa). The interval 39 to 142 is required for homophilic binding; that stretch reads DAVPPNVVEE…QTSVQFRVYP (104 aa). Positions 42–140 constitute an Ig-like V-type domain; sequence PPNVVEEKSV…PIQTSVQFRV (99 aa). N87, N104, N113, N148, N152, N173, N197, N224, N256, N288, N292, N302, N315, and N331 each carry an N-linked (GlcNAc...) asparagine glycan. Ig-like C2-type domains lie at 147 to 232, 237 to 317, and 325 to 403; these read PNVT…FNLD, PDAP…KNIT, and PSIQ…FRIS. C167 and C215 are disulfide-bonded. A disulfide bond links C259 and C299. C344 and C392 are disulfide-bonded. N374 carries N-linked (GlcNAc...) asparagine; atypical glycosylation. Residues 426-446 traverse the membrane as a helical segment; the sequence is IAGIVIGSVAGVALIAALAYF. Residues 445-457 are interaction with calmodulin; the sequence is YFLYSRKTGGGSD. Topologically, residues 447–519 are cytoplasmic; that stretch reads LYSRKTGGGS…ETVYSVVKKK (73 aa). Residues 447 to 519 are interaction with FLNA; sequence LYSRKTGGGS…ETVYSVVKKK (73 aa). The tract at residues 455 to 519 is disordered; that stretch reads GSDHRDLTEH…ETVYSVVKKK (65 aa). Residues 456–466 show a composition bias toward basic and acidic residues; it reads SDHRDLTEHKP. The tract at residues 484-519 is required for interaction with PTPN11 and PTPN6 and for control of phosphorylation level; sequence DDVSYSVLNFNAQQSKRPTSASSSPTETVYSVVKKK. Phosphotyrosine; by SRC, LCK, INSR and EGFR is present on Y488. The span at 489–512 shows a compositional bias: polar residues; the sequence is SVLNFNAQQSKRPTSASSSPTETV. Phosphoserine is present on S503. Y513 bears the Phosphotyrosine; by INSR, SRC and LCK mark. The essential for interaction with PTPN11 and PTPN6 stretch occupies residues 513–516; it reads YSVV.

It belongs to the immunoglobulin superfamily. CEA family. In terms of assembly, monomer. Oligomer. Heterodimer. Homodimer. Cis-dimer/oligomer (via Ig-like C2-type and/or via cytoplasmic domains); induced by trans-homophilic cell adhesion through an allosteric mechanism transmitted by the Ig-like V-type domain, and is regulated by intracellular calcium and calmodulin. Interacts (via cytoplasmic domain) with calmodulin in a calcium dependent manner; reduces homophilic cell adhesion through dissociation of dimer. Isoform 1 interacts (via cytoplasmic domain) with PTPN11 (preferentially) and PTPN6; cis-homodimer form is preferred; this interaction is decreased by formation of isoform 1 / isoform 2 cis-heterodimers and is dependent on the monomer/dimer equilibrium; this interaction is phosphorylation-dependent. Isoform 1 interacts with LYN. Isoform 1 interacts (via cytoplasmic domain) with SRC (via SH2 domain); this interaction is regulated by trans-homophilic cell adhesion. Isoform 1 interacts (via cytoplasmic domain) with LCK; mediates phosphorylation at Tyr-488 and Tyr-513 resulting in PTPN6 association. Isoform 1 interacts with PTPN6; this interaction is phosphorylation-dependent and causes a profound decrease in TCR stimulation-induced CD247 and ZAP70 phosphorylation. Isoform 1 interacts with TCR/CD3 complex through TCR beta chain and CD3E; colocalizes at the cell surface and upon stimulation of the TCR/CD3 complex recruits PTPN6 in the TCR/CD3 complex, resulting in dephosphorylation of CD247 and ZAP70. Isoform 1 interacts (via cytoplasmic domain) with SHC1 (via SH2 domain); SHC1 mediates interaction with INSR or EGFR in a Ser-503 phosphorylation-dependent manner. Isoform 1 interacts with EGFR; the interaction is indirect. Isoform 1 interacts with CSF3R; down-regulates the CSF3R-STAT3 pathway through recruitment of PTPN6 that dephosphorylates CSF3R. Isoform 1 (phosphorylated form) interacts with TLR4 and SYK; recruits PTPN6 that dephosphorylates SYK, reducing the production of reactive oxygen species (ROS) and lysosome disruption, leading to a reduction of the inflammasome activity. Isoform 1 interacts with FLNA; inhibits cell migration and cell scattering by interfering with the interaction of FLNA with RALA. Isoform 1 interacts (via cytoplasmic domain) with PXN; the interaction is phosphotyrosyl-dependent. Isoform 1 interacts with KLRK1; recruits PTPN6 that dephosphorylates VAV1. Isoform 1 interacts with CEACAM8. Isoform 1 interacts with FASN; this interaction is insulin and phosphorylation-dependent; reduces fatty-acid synthase activity. Interacts (via Ig-like V-type) with HAVCR2 (via Ig-like V-type); facilitates the maturation and cell surface expression of HAVCR2 thereby regulating T-cell tolerance induction. Isoform 2 interacts (via the cytoplasmic domain) with ANXA2; this interaction is regulated by phosphorylation and appears in the AIIt complex. Interacts (via Lewis X moieties) with CD209 (via C-type lectin domain); this interaction is regulated by the glycosylation pattern of CEACAM1 on cell types and regulates contact between dendritic cells and neutrophils. In terms of processing, phosphorylated on serine and tyrosine. Isoform 1 is phosphorylated on tyrosine by Src family kinases like SRC and LCK and by receptor like CSF3R, EGFR and INSR upon stimulation. Phosphorylated at Ser-503; mediates activity. Phosphorylated at Tyr-488; regulates activity. Phosphorylated at Tyr-488 by EGFR and INSR upon stimulation; this phosphorylation is Ser-503-phosphorylation-dependent; mediates cellular internalization; increases interaction with FASN. Phosphorylated at Tyr-488 and Tyr-513 by LCK; mediates PTPN6 association and is regulated by homophilic ligation of CEACAM1 in the absence of T-cell activation. Phosphorylated at Tyr-513; mediates interaction with PTPN11. Post-translationally, phosphorylated on serine and threonine. Expressed in epithelia, vessel endothelia, leukocytes and platelets. Isoform 1 and isoform 2 are highly expressed in liver and intestine, moderately in lung, and weakly in muscle, kidney, and spleen. Expressed in granulocytes, lymphocytes, granulocytes, B cells, and T-cells.

It localises to the cell membrane. Its subcellular location is the lateral cell membrane. It is found in the apical cell membrane. The protein resides in the basal cell membrane. The protein localises to the cell junction. It localises to the adherens junction. Its subcellular location is the cytoplasmic vesicle. It is found in the secretory vesicle. The protein resides in the cell projection. The protein localises to the microvillus membrane. In terms of biological role, cell adhesion protein that mediates homophilic cell adhesion in a calcium-independent manner. Plays a role as coinhibitory receptor in immune response, insulin action and also functions as an activator during angiogenesis. Its coinhibitory receptor function is phosphorylation- and PTPN6 -dependent, which in turn, suppress signal transduction of associated receptors by dephosphorylation of their downstream effectors. Plays a role in immune response, of T-cells, natural killer (NK) and neutrophils. Upon TCR/CD3 complex stimulation, inhibits TCR-mediated cytotoxicity by blocking granule exocytosis by mediating homophilic binding to adjacent cells, allowing interaction with and phosphorylation by LCK and interaction with the TCR/CD3 complex which recruits PTPN6 resulting in dephosphorylation of CD247 and ZAP70. Also inhibits T-cell proliferation and cytokine production through inhibition of JNK cascade and plays a crucial role in regulating autoimmunity and anti-tumor immunity by inhibiting T-cell through its interaction with HAVCR2. Upon natural killer (NK) cells activation, inhibit KLRK1-mediated cytolysis of CEACAM1-bearing tumor cells by trans-homophilic interactions with CEACAM1 on the target cell and lead to cis-interaction between CEACAM1 and KLRK1, allowing PTPN6 recruitment and then VAV1 dephosphorylation. Upon neutrophils activation negatively regulates IL1B production by recruiting PTPN6 to a SYK-TLR4-CEACAM1 complex, that dephosphorylates SYK, reducing the production of reactive oxygen species (ROS) and lysosome disruption, which in turn, reduces the activity of the inflammasome. Down-regulates neutrophil production by acting as a coinhibitory receptor for CSF3R by downregulating the CSF3R-STAT3 pathway through recruitment of PTPN6 that dephosphorylates CSF3R. Also regulates insulin action by promoting INS clearance and regulating lipogenesis in liver through regulating insulin signaling. Upon INS stimulation, undergoes phosphorylation by INSR leading to INS clearance by increasing receptor-mediated insulin endocytosis. This inernalization promotes interaction with FASN leading to receptor-mediated insulin degradation and to reduction of FASN activity leading to negative regulation of fatty acid synthesis. INSR-mediated phosphorylation also provokes a down-regulation of cell proliferation through SHC1 interaction resulting in decrease coupling of SHC1 to the MAPK3/ERK1-MAPK1/ERK2 and phosphatidylinositol 3-kinase pathways. Functions as activator in angiogenesis by promoting blood vessel remodeling through endothelial cell differentiation and migration and in arteriogenesis by increasing the number of collateral arteries and collateral vessel calibers after ischemia. Also regulates vascular permeability through the VEGFR2 signaling pathway resulting in control of nitric oxide production. Down-regulates cell growth in response to EGF through its interaction with SHC1 that mediates interaction with EGFR resulting in decrease coupling of SHC1 to the MAPK3/ERK1-MAPK1/ERK2 pathway. Negatively regulates platelet aggregation by decreasing platelet adhesion on type I collagen through the GPVI-FcRgamma complex. Inhibits cell migration and cell scattering through interaction with FLNA; interferes with the interaction of FLNA with RALA. Mediates bile acid transport activity in a phosphorylation dependent manner. Negatively regulates osteoclastogenesis. Its function is as follows. Cell adhesion proteins that mediates homophilic cell adhesion in a calcium-independent manner. Promotes populations of T-cells regulating IgA production and secretion associated with control of the commensal microbiota and resistance to enteropathogens. The protein is Cell adhesion molecule CEACAM1 of Rattus norvegicus (Rat).